Here is a 340-residue protein sequence, read N- to C-terminus: Glyceraldehyde-3-phosphate dehydrogenase (340 aa).

NAD(+)-binding positions include 11 to 12 (SI) and G111. 140-142 (SCN) is a binding site for D-glyceraldehyde 3-phosphate. The active-site Nucleophile is C141. R169 contributes to the NAD(+) binding site. Residue 195 to 196 (HG) coordinates D-glyceraldehyde 3-phosphate. Position 303 (Q303) interacts with NAD(+).

This sequence belongs to the glyceraldehyde-3-phosphate dehydrogenase family. In terms of assembly, homotetramer.

The protein localises to the cytoplasm. It carries out the reaction D-glyceraldehyde 3-phosphate + phosphate + NADP(+) = (2R)-3-phospho-glyceroyl phosphate + NADPH + H(+). The enzyme catalyses D-glyceraldehyde 3-phosphate + phosphate + NAD(+) = (2R)-3-phospho-glyceroyl phosphate + NADH + H(+). It functions in the pathway carbohydrate degradation; glycolysis; pyruvate from D-glyceraldehyde 3-phosphate: step 1/5. The chain is Glyceraldehyde-3-phosphate dehydrogenase from Methanococcus maripaludis (strain DSM 14266 / JCM 13030 / NBRC 101832 / S2 / LL).